The chain runs to 529 residues: Type I restriction enzyme StySJI methylase subunit (529 aa).

S-adenosyl-L-methionine contacts are provided by residues 148-153, 178-180, and E216; these read QYFTPR and TAG. Positions 405–444 are disordered; sequence YGEDPHGLSPREEGEWSFNAEESEVADSEENKNTDQHQAT. A compositionally biased stretch (basic and acidic residues) spans 407–418; the sequence is EDPHGLSPREEG.

The protein belongs to the N(4)/N(6)-methyltransferase family. As to quaternary structure, the type I restriction/modification system is composed of three polypeptides R, M and S; the restriction enzyme has stoichiometry R(2)M(2)S(1) while the methyltransferase is M(2)S(1).

It carries out the reaction a 2'-deoxyadenosine in DNA + S-adenosyl-L-methionine = an N(6)-methyl-2'-deoxyadenosine in DNA + S-adenosyl-L-homocysteine + H(+). In terms of biological role, the subtype gamma methyltransferase (M) subunit of a type I restriction enzyme. The M and S subunits together form a methyltransferase (MTase) that methylates two adenine residues of the sequence 5'-GAGN(6)GTRC-3'. In the presence of the R subunit the complex can also act as an endonuclease, binding to the same target sequence but cutting the DNA some distance from this site. Whether the DNA is cut or modified depends on the methylation state of the target sequence. When the target site is unmodified, the DNA is cut. When the target site is hemimethylated, the complex acts as a maintenance MTase modifying the DNA so that both strands become methylated. After locating a non-methylated recognition site, the enzyme complex serves as a molecular motor that translocates DNA in an ATP-dependent manner until a collision occurs that triggers cleavage. The sequence is that of Type I restriction enzyme StySJI methylase subunit from Salmonella typhimurium (strain LT2 / SGSC1412 / ATCC 700720).